We begin with the raw amino-acid sequence, 329 residues long: tRNA-modifying protein YgfZ (329 aa).

Positions 27 and 189 each coordinate folate.

The protein belongs to the tRNA-modifying YgfZ family.

The protein resides in the cytoplasm. Its function is as follows. Folate-binding protein involved in regulating the level of ATP-DnaA and in the modification of some tRNAs. It is probably a key factor in regulatory networks that act via tRNA modification, such as initiation of chromosomal replication. This chain is tRNA-modifying protein YgfZ, found in Cronobacter sakazakii (strain ATCC BAA-894) (Enterobacter sakazakii).